The chain runs to 436 residues: GTPase Der (436 aa).

2 EngA-type G domains span residues 4 to 167 and 175 to 351; these read PTVA…PVEE and IRFS…ESQN. Residues 10–17, 57–61, 119–122, 181–188, 229–233, and 294–297 each bind GTP; these read GRPNVGKS, DTGGI, NKVD, DTAGM, and NKWD. Positions 352 to 436 constitute a KH-like domain; that stretch reads KRIPSAVLND…PINLIARKRK (85 aa).

This sequence belongs to the TRAFAC class TrmE-Era-EngA-EngB-Septin-like GTPase superfamily. EngA (Der) GTPase family. As to quaternary structure, associates with the 50S ribosomal subunit.

GTPase that plays an essential role in the late steps of ribosome biogenesis. The polypeptide is GTPase Der (Streptococcus agalactiae serotype III (strain NEM316)).